The sequence spans 410 residues: Schlafen-like protein 1 (410 aa).

Disordered regions lie at residues Met-1 to Gln-20 and Leu-141 to Arg-199. Polar residues predominate over residues Ala-8–Gln-20. Residues Ser-154 to Pro-173 show a composition bias toward pro residues. An ATP-binding site is contributed by Gly-264–Val-271. Residues Gln-370–Gln-401 are a coiled coil.

Belongs to the Schlafen family. Subgroup I subfamily.

The protein is Schlafen-like protein 1 (Slfnl1) of Mus musculus (Mouse).